Consider the following 145-residue polypeptide: Allergen MAG29 (145 aa).

Disordered stretches follow at residues K1–Q21 and A103–D145. Gly residues predominate over residues G104 to S137.

This sequence belongs to the heat shock protein 70 family.

This Dermatophagoides farinae (American house dust mite) protein is Allergen MAG29 (MAG29).